A 396-amino-acid chain; its full sequence is Elongation factor Tu (396 aa).

Residues 10-207 enclose the tr-type G domain; sequence KPHCNIGTIG…VDAYIPQPPR (198 aa). The tract at residues 19–26 is G1; sequence GHVDHGKT. 19–26 serves as a coordination point for GTP; that stretch reads GHVDHGKT. Thr-26 contacts Mg(2+). The segment at 60 to 64 is G2; sequence GITIS. A G3 region spans residues 81-84; it reads DCPG. GTP-binding positions include 81 to 85 and 136 to 139; these read DCPGH and NKVD. The tract at residues 136–139 is G4; that stretch reads NKVD. The segment at 174-176 is G5; the sequence is SAL.

The protein belongs to the TRAFAC class translation factor GTPase superfamily. Classic translation factor GTPase family. EF-Tu/EF-1A subfamily. In terms of assembly, monomer.

It localises to the cytoplasm. It catalyses the reaction GTP + H2O = GDP + phosphate + H(+). Functionally, GTP hydrolase that promotes the GTP-dependent binding of aminoacyl-tRNA to the A-site of ribosomes during protein biosynthesis. The chain is Elongation factor Tu from Novosphingobium aromaticivorans (strain ATCC 700278 / DSM 12444 / CCUG 56034 / CIP 105152 / NBRC 16084 / F199).